The primary structure comprises 23 residues: Cytochrome c oxidase subunit 7A1, mitochondrial (23 aa).

It belongs to the cytochrome c oxidase VIIa family. Component of the complex IV (CIV, cytochrome c oxidase), a multisubunit enzyme composed of 14 subunits. The complex is composed of a catalytic core of 3 subunits MT-CO1, MT-CO2 and MT-CO3, encoded in the mitochondrial DNA, and 11 supernumerary subunits COX4I1 (or COX4I2), COX5A, COX5B, COX6A2 (or COX6A1), COX6B1 (or COX6B2), COX6C, COX7A1 (or COX7A2), COX7B, COX7C, COX8B and NDUFA4, which are encoded in the nuclear genome. The complex exists as a monomer or a dimer and forms supercomplexes (SCs) in the inner mitochondrial membrane with NADH-ubiquinone oxidoreductase (complex I, CI) and ubiquinol-cytochrome c oxidoreductase (cytochrome b-c1 complex, complex III, CIII), resulting in different assemblies (supercomplex SCI(1)III(2)IV(1) and megacomplex MCI(2)III(2)IV(2)).

Its subcellular location is the mitochondrion inner membrane. Its pathway is energy metabolism; oxidative phosphorylation. Component of the mitochondrial respiratory complex IV (CIV, also named cytochrome c oxidase complex), the last enzyme in the mitochondrial electron transport chain which drives oxidative phosphorylation. The CIV complex is the component of the respiratory chain that catalyzes the reduction of oxygen to water. Acts as an assembly factor that specifically drives the homodimerization of CIV complexes, mediating the formation of mitochondrial respiratory supercomplexes (respirasomes) containing two CIV: supercomplxes with two molecules of CIV show improved activity. Despite being highly expressed in brown adipose tissue, not required for thermogenesis. In Canis lupus familiaris (Dog), this protein is Cytochrome c oxidase subunit 7A1, mitochondrial (COX7A1).